A 364-amino-acid polypeptide reads, in one-letter code: Homeobox protein KNOX3 (364 aa).

The interval 13–49 is disordered; the sequence is TAHGQHHSQLPWGSSPLSAVISPPPQQQQQHQQQSAG. Residues 19 to 29 are compositionally biased toward polar residues; the sequence is HSQLPWGSSPL. An ELK domain is found at 246–266; it reads ELKHHLLKKYSGYLSSLKQEL. Positions 267–330 form a DNA-binding region, homeobox; TALE-type; it reads SKKKKKGKLP…NQRKRHWKPT (64 aa).

It belongs to the TALE/KNOX homeobox family. Binds DNA as a monomer. As to expression, the unit of inflorescence is the spikelet, which bears a fertile tract, the lemma, and the floret consisting of palea, two lodicules, three stamens and the pistil. The lemma is completed by the awn, an appendage homologous to the laminae of normal leaves. Expressed in the inflorescences and lemmas and at lower levels, in palea and vascular bundles.

It is found in the nucleus. May play a role in meristem formation and/or maintenance. Overexpression causes the hooded phenotype characterized by the appearance of an extra flower of inverse polarity on the lemma. Binds to the DNA sequence 5'-TGAC-3'. The protein is Homeobox protein KNOX3 (KNOX3) of Hordeum vulgare (Barley).